The sequence spans 195 residues: MPQSNAGGRSDCIGAARDSSFGPMSSSAIPATEVVIAADCWQAEASAESVVLRAIEAAATMIDADTGDAELAVMLTDDDGVRALNASYRGIDKPTNVLSFPAPQPDYQDACQDSGGAPQMLGDIAIAYQTVRREADDEGKPFAHHLSHLAVHGFLHLVGYDHETDAEAETMESTERSILAGLGIPDPYADQDRVS.

His152, His156, and His162 together coordinate Zn(2+).

The protein belongs to the endoribonuclease YbeY family. Zn(2+) serves as cofactor.

It is found in the cytoplasm. Its function is as follows. Single strand-specific metallo-endoribonuclease involved in late-stage 70S ribosome quality control and in maturation of the 3' terminus of the 16S rRNA. In Rhodopseudomonas palustris (strain BisB5), this protein is Endoribonuclease YbeY.